The chain runs to 111 residues: MKRLLSLIFLVFVFFAVMLTPPALAGDAAAGKTVFTAKCAQCHLGGKNLVNPAKTLSKADLEANGMASLDAIITQVTNGKAAMPAFGKLLTAEQIENVATYVLAQAEADWK.

Positions 1–25 (MKRLLSLIFLVFVFFAVMLTPPALA) are cleaved as a signal peptide. Heme c contacts are provided by cysteine 39, cysteine 42, histidine 43, and methionine 83.

This sequence belongs to the cytochrome c family. PetJ subfamily. As to quaternary structure, monomer. Binds 1 heme c group covalently per subunit.

It localises to the cellular thylakoid lumen. Functions as an electron carrier between membrane-bound cytochrome b6-f and photosystem I in oxygenic photosynthesis. The protein is Cytochrome c6 of Rippkaea orientalis (strain PCC 8801 / RF-1) (Cyanothece sp. (strain PCC 8801)).